Consider the following 558-residue polypeptide: Urocanate hydratase (558 aa).

NAD(+) is bound by residues 54–55, glutamine 132, 178–180, glutamate 198, 244–245, 265–269, 275–276, and tyrosine 324; these read GG, GMG, NA, QTSAH, and YL. The active site involves cysteine 412. Glycine 494 is an NAD(+) binding site.

This sequence belongs to the urocanase family. Requires NAD(+) as cofactor.

The protein resides in the cytoplasm. It catalyses the reaction 4-imidazolone-5-propanoate = trans-urocanate + H2O. Its pathway is amino-acid degradation; L-histidine degradation into L-glutamate; N-formimidoyl-L-glutamate from L-histidine: step 2/3. Functionally, catalyzes the conversion of urocanate to 4-imidazolone-5-propionate. This Acinetobacter baumannii (strain ACICU) protein is Urocanate hydratase.